A 329-amino-acid polypeptide reads, in one-letter code: Ketol-acid reductoisomerase (NADP(+)) (329 aa).

A KARI N-terminal Rossmann domain is found at 1-181 (MKVYYEQDAN…GGTRSGVIET (181 aa)). Residues 24 to 27 (YGSQ), Arg47, and 82 to 85 (DQYQ) contribute to the NADP(+) site. Residue His107 is part of the active site. Gly133 serves as a coordination point for NADP(+). One can recognise a KARI C-terminal knotted domain in the interval 182–327 (TFREETETDL…ARLRSMMPWL (146 aa)). The Mg(2+) site is built by Asp190, Glu194, Glu226, and Glu230. Position 251 (Ser251) interacts with substrate.

Belongs to the ketol-acid reductoisomerase family. It depends on Mg(2+) as a cofactor.

The catalysed reaction is (2R)-2,3-dihydroxy-3-methylbutanoate + NADP(+) = (2S)-2-acetolactate + NADPH + H(+). It catalyses the reaction (2R,3R)-2,3-dihydroxy-3-methylpentanoate + NADP(+) = (S)-2-ethyl-2-hydroxy-3-oxobutanoate + NADPH + H(+). It functions in the pathway amino-acid biosynthesis; L-isoleucine biosynthesis; L-isoleucine from 2-oxobutanoate: step 2/4. It participates in amino-acid biosynthesis; L-valine biosynthesis; L-valine from pyruvate: step 2/4. Its function is as follows. Involved in the biosynthesis of branched-chain amino acids (BCAA). Catalyzes an alkyl-migration followed by a ketol-acid reduction of (S)-2-acetolactate (S2AL) to yield (R)-2,3-dihydroxy-isovalerate. In the isomerase reaction, S2AL is rearranged via a Mg-dependent methyl migration to produce 3-hydroxy-3-methyl-2-ketobutyrate (HMKB). In the reductase reaction, this 2-ketoacid undergoes a metal-dependent reduction by NADPH to yield (R)-2,3-dihydroxy-isovalerate. This chain is Ketol-acid reductoisomerase (NADP(+)), found in Oleidesulfovibrio alaskensis (strain ATCC BAA-1058 / DSM 17464 / G20) (Desulfovibrio alaskensis).